The primary structure comprises 408 residues: Glutaryl-CoA dehydrogenase, mitochondrial (408 aa).

The N-terminal 13 residues, 1-13 (KGGKTQGRSAKSS), are a transit peptide targeting the mitochondrion. Substrate is bound by residues 107–108 (RS) and S156. FAD is bound by residues 147 to 156 (FGLTEPNHGS), S156, and 182 to 184 (WIT). K210 carries the post-translational modification N6-acetyllysine. A substrate-binding site is contributed by 257–264 (FGCLNNAR). FAD-binding positions include R289, Q300, and 357-361 (DMLGG). Catalysis depends on E384, which acts as the Proton acceptor. G385 is a substrate binding site. FAD-binding positions include T386, 386-388 (THD), and F404.

Belongs to the acyl-CoA dehydrogenase family. In terms of assembly, homotetramer. FAD is required as a cofactor.

Its subcellular location is the mitochondrion matrix. The enzyme catalyses glutaryl-CoA + oxidized [electron-transfer flavoprotein] + 2 H(+) = (2E)-butenoyl-CoA + reduced [electron-transfer flavoprotein] + CO2. Its pathway is amino-acid metabolism; lysine degradation. The protein operates within amino-acid metabolism; tryptophan metabolism. In terms of biological role, catalyzes the oxidative decarboxylation of glutaryl-CoA to crotonyl-CoA and CO(2) in the degradative pathway of L-lysine, L-hydroxylysine, and L-tryptophan metabolism. It uses electron transfer flavoprotein as its electron acceptor. The chain is Glutaryl-CoA dehydrogenase, mitochondrial (GCDH) from Sus scrofa (Pig).